A 388-amino-acid polypeptide reads, in one-letter code: Protein phosphatase 2C 57 (388 aa).

The region spanning 59-348 is the PPM-type phosphatase domain; the sequence is RWGYTSVQGF…DNISIIIADL (290 aa). Mn(2+) contacts are provided by aspartate 93, glycine 94, aspartate 296, and aspartate 339. Residues 363 to 383 form a helical membrane-spanning segment; that stretch reads VVVELVQAATTIGLVTVGIWM.

Belongs to the PP2C family. The cofactor is Mg(2+). It depends on Mn(2+) as a cofactor.

The protein resides in the membrane. It is found in the plastid. The protein localises to the chloroplast stroma. The catalysed reaction is O-phospho-L-seryl-[protein] + H2O = L-seryl-[protein] + phosphate. It carries out the reaction O-phospho-L-threonyl-[protein] + H2O = L-threonyl-[protein] + phosphate. Its function is as follows. Protein phosphatase specifically required for efficient dephosphorylation of the light-harvesting complex II outer antennae (LCHII) and transition from state 2 to state 1. State transition plays a central role in response to environmental changes and allows to adjust to changing light conditions via the redistribution of light excitation energy between photosystem II (PSII) and photosystem I (PSI) in a short time by relocating LHCII proteins. Mainly responsible for the dephosphorylation of Lhcb1 and Lhcb2 but not of the photosystem II core proteins. This is Protein phosphatase 2C 57 from Arabidopsis thaliana (Mouse-ear cress).